Here is a 248-residue protein sequence, read N- to C-terminus: Ras-like protein family member 11B (248 aa).

The segment at 30 to 248 is small GTPase-like; that stretch reads ASSRVIKIAV…SSKVRTATSV (219 aa). GTP is bound by residues 41–48, 88–99, and 153–156; these read GGSGVGKT, DTPGVQINEQNL, and NKAD. A disordered region spans residues 206–228; the sequence is QNTGTSERRKNSIIPRPKSPNMQ.

Belongs to the small GTPase superfamily. Ras family.

It carries out the reaction GTP + H2O = GDP + phosphate + H(+). In Xenopus laevis (African clawed frog), this protein is Ras-like protein family member 11B.